Reading from the N-terminus, the 252-residue chain is uncharacterized protein (252 aa).

A run of 10 repeats spans residues 68–82 (TYNQ…DLVD), 83–97 (TYNQ…DLVD), 98–112 (TYNQ…DLVD), 113–127 (TYNQ…DLVD), 128–142 (TYNQ…DLVD), 143–157 (TYNQ…DLVD), 158–172 (TYNQ…DLID), 173–187 (TYNQ…DLVD), 188–202 (TYNQ…DLVD), and 203–217 (TYNQ…DLVD). Residues 68–246 (TYNQSQNVCP…LIDTYNQSQN (179 aa)) are 13 X 15 AA tandem repeats. The 11; truncated repeat unit spans residues 218–230 (TYNQSQNVCPQDL). The stretch at 231-239 (NVYTQDLID) is one 12; truncated repeat. The 13; truncated repeat unit spans residues 240–246 (TYNQSQN).

Functionally, a protein probably derived from this gene is found in cuboidal crystalline inclusions, but is not toxic even when coexpressed with upstream ORF1. The protein runs anomalously as a 50 kDa band in gels. This is an uncharacterized protein from Bacillus thuringiensis subsp. kurstaki.